Here is an 87-residue protein sequence, read N- to C-terminus: Putative sodium channel toxin Ts40 (87 aa).

Residues 1–19 (MTALFYLLFLTSVIIETHQ) form the signal peptide. 3 cysteine pairs are disulfide-bonded: Cys-41–Cys-63, Cys-47–Cys-68, and Cys-51–Cys-70.

The protein belongs to the long (4 C-C) scorpion toxin superfamily. Sodium channel inhibitor family. As to expression, expressed by the venom gland.

It is found in the secreted. Putative sodium channel toxin. This Tityus serrulatus (Brazilian scorpion) protein is Putative sodium channel toxin Ts40.